The chain runs to 249 residues: Ditrans,polycis-undecaprenyl-diphosphate synthase ((2E,6E)-farnesyl-diphosphate specific) (249 aa).

Residue aspartate 26 is part of the active site. Aspartate 26 is a Mg(2+) binding site. Residues glycine 27–arginine 30, tryptophan 31, arginine 39, histidine 43, and serine 71–glutamate 73 each bind substrate. The active-site Proton acceptor is the asparagine 74. Residues tryptophan 75, arginine 77, arginine 194, and arginine 200–serine 202 each bind substrate. A Mg(2+)-binding site is contributed by glutamate 213.

Belongs to the UPP synthase family. In terms of assembly, homodimer. Mg(2+) serves as cofactor.

It catalyses the reaction 8 isopentenyl diphosphate + (2E,6E)-farnesyl diphosphate = di-trans,octa-cis-undecaprenyl diphosphate + 8 diphosphate. Catalyzes the sequential condensation of isopentenyl diphosphate (IPP) with (2E,6E)-farnesyl diphosphate (E,E-FPP) to yield (2Z,6Z,10Z,14Z,18Z,22Z,26Z,30Z,34E,38E)-undecaprenyl diphosphate (di-trans,octa-cis-UPP). UPP is the precursor of glycosyl carrier lipid in the biosynthesis of bacterial cell wall polysaccharide components such as peptidoglycan and lipopolysaccharide. This chain is Ditrans,polycis-undecaprenyl-diphosphate synthase ((2E,6E)-farnesyl-diphosphate specific), found in Buchnera aphidicola subsp. Schizaphis graminum (strain Sg).